The primary structure comprises 802 residues: Neuronal PAS domain-containing protein 4 (802 aa).

Positions 1–13 are basic motif; degenerate; it reads MYRSTKGASKARR. Positions 1 to 53 constitute a bHLH domain; sequence MYRSTKGASKARRDQINAEIRNLKELLPLAEADKVRLSYLHIMSLACIYTRKG. Residues 5-38 adopt a coiled-coil conformation; the sequence is TKGASKARRDQINAEIRNLKELLPLAEADKVRLS. Positions 14–53 are helix-loop-helix motif; that stretch reads DQINAEIRNLKELLPLAEADKVRLSYLHIMSLACIYTRKG. PAS domains follow at residues 70–144 and 203–273; these read SAQE…LDTD and PGPG…LAES. Positions 278-317 constitute a PAC domain; that stretch reads AEMVVRLQAKTGGWAWIYCLLYSEGPEGPITANNYPISDM. Polar residues-rich tracts occupy residues 466–476, 506–518, and 532–555; these read FSDQLTPSSAT, STFP…STAT, and TPPS…QLSP. Disordered regions lie at residues 466–485 and 506–555; these read FSDQ…TSPL and STFP…QLSP. A coiled-coil region spans residues 624–648; it reads YSEKEQNEIDRLIQQISQLAQGMDR. The tract at residues 717 to 749 is disordered; sequence LSTPDPSEEWGSGDPEAEGPGGAPSPCNNLSPE.

As to quaternary structure, efficient DNA binding requires dimerization with another bHLH protein. Heterodimer; forms a heterodimer with ARNT, ARNT2 or BMAL1. Post-translationally, ubiquitinated, leading to degradation by the proteosome. In terms of tissue distribution, brain.

It localises to the nucleus. In terms of biological role, transcription factor expressed in neurons of the brain that regulates the excitatory-inhibitory balance within neural circuits and is required for contextual memory in the hippocampus. Plays a key role in the structural and functional plasticity of neurons. Acts as an early-response transcription factor in both excitatory and inhibitory neurons, where it induces distinct but overlapping sets of late-response genes in these two types of neurons, allowing the synapses that form on inhibitory and excitatory neurons to be modified by neuronal activity in a manner specific to their function within a circuit, thereby facilitating appropriate circuit responses to sensory experience. In excitatory neurons, activates transcription of BDNF, which in turn controls the number of GABA-releasing synapses that form on excitatory neurons, thereby promoting an increased number of inhibitory synapses on excitatory neurons. In inhibitory neurons, regulates a distinct set of target genes that serve to increase excitatory input onto somatostatin neurons, probably resulting in enhanced feedback inhibition within cortical circuits. The excitatory and inhibitory balance in neurons affects a number of processes, such as short-term and long-term memory, acquisition of experience, fear memory, response to stress and social behavior. Acts as a regulator of dendritic spine development in olfactory bulb granule cells in a sensory-experience-dependent manner by regulating expression of MDM2. Efficient DNA binding requires dimerization with another bHLH protein, such as ARNT, ARNT2 or BMAL1. Can activate the CME (CNS midline enhancer) element. The chain is Neuronal PAS domain-containing protein 4 from Homo sapiens (Human).